A 174-amino-acid chain; its full sequence is Co-chaperone protein HscB (174 aa).

The J domain occupies 2–74 (NYFALFDLPR…LNRAIYFLCL (73 aa)).

It belongs to the HscB family. As to quaternary structure, interacts with HscA and stimulates its ATPase activity. Interacts with IscU.

In terms of biological role, co-chaperone involved in the maturation of iron-sulfur cluster-containing proteins. Seems to help targeting proteins to be folded toward HscA. The protein is Co-chaperone protein HscB of Buchnera aphidicola subsp. Acyrthosiphon pisum (strain 5A).